Consider the following 73-residue polypeptide: U-scoloptoxin(22)-Cw1a (73 aa).

The signal sequence occupies residues 1–24 (MRRFVFLAFVLVLFVIANLDSSSA).

This sequence belongs to the scoloptoxin-22 family. In terms of processing, contains 1 disulfide bond. In terms of tissue distribution, expressed by the venom gland.

The protein localises to the secreted. In Cormocephalus westwoodi (Westwood's green centipede), this protein is U-scoloptoxin(22)-Cw1a.